We begin with the raw amino-acid sequence, 333 residues long: Photosystem II assembly lipoprotein Ycf48 (333 aa).

The N-terminal stretch at 1-23 (MNRLLSSAVNLLLVLVLGVGLSG) is a signal peptide. Cysteine 24 carries the N-palmitoyl cysteine lipid modification. A lipid anchor (S-diacylglycerol cysteine) is attached at cysteine 24.

Belongs to the Ycf48 family. Part of early PSII assembly complexes which includes D1 (psbA) and PsbI; not found in mature PSII. Binds to the lumenal side of PSII complexes. Interacts with YidC.

It localises to the cellular thylakoid membrane. A factor required for optimal assembly of photosystem II (PSII), acting in the early stages of PSII assembly. Also plays a role in replacement of photodamaged D1 (psbA). Assists YidC in synthesis of chlorophyll-binding proteins. The polypeptide is Photosystem II assembly lipoprotein Ycf48 (Synechococcus sp. (strain CC9902)).